Here is a 491-residue protein sequence, read N- to C-terminus: Alpha-2-antiplasmin (491 aa).

The first 27 residues, 1-27 (MALLRGLLVLSLSCLQGPCFTFSPVSA), serve as a signal peptide directing secretion. The propeptide occupies 28 to 39 (VDLPGQQPVSEQ). A disulfide bridge links C70 with C143. N126, N295, N309, and N316 each carry an N-linked (GlcNAc...) asparagine glycan. Residues 439-491 (SALPQLQEQRDSPDNRLIGQNDKADFHGGKTFGPDLKLAPRMEEDYPQFSSPK) are disordered. Residue Y484 is modified to Sulfotyrosine.

This sequence belongs to the serpin family. As to quaternary structure, forms protease inhibiting heterodimer with TMPRSS7. Post-translationally, proteolytically cleaved at Pro-35 by both the prolyl endopeptidase FAP form and antiplasmin-cleaving enzyme FAP soluble form to generate mature alpha-2-antiplasmin. Expressed by the liver and secreted in plasma.

It localises to the secreted. In terms of biological role, serine protease inhibitor. The major targets of this inhibitor are plasmin and trypsin, but it also inactivates matriptase-3/TMPRSS7 and chymotrypsin. The sequence is that of Alpha-2-antiplasmin (Serpinf2) from Mus musculus (Mouse).